A 437-amino-acid polypeptide reads, in one-letter code: Trigger factor (437 aa).

One can recognise a PPIase FKBP-type domain in the interval 163-248; it reads GHMVTIDYAF…LNEIKRKELP (86 aa).

The protein belongs to the FKBP-type PPIase family. Tig subfamily.

The protein resides in the cytoplasm. It catalyses the reaction [protein]-peptidylproline (omega=180) = [protein]-peptidylproline (omega=0). Its function is as follows. Involved in protein export. Acts as a chaperone by maintaining the newly synthesized protein in an open conformation. Functions as a peptidyl-prolyl cis-trans isomerase. This is Trigger factor from Pelobacter propionicus (strain DSM 2379 / NBRC 103807 / OttBd1).